The sequence spans 204 residues: Large ribosomal subunit protein uL4 (204 aa).

Positions 42–52 (GTKAQKSRSQV) are enriched in polar residues. Positions 42–70 (GTKAQKSRSQVSGTTKKSKKQKGGGARHG) are disordered.

It belongs to the universal ribosomal protein uL4 family. As to quaternary structure, part of the 50S ribosomal subunit.

In terms of biological role, one of the primary rRNA binding proteins, this protein initially binds near the 5'-end of the 23S rRNA. It is important during the early stages of 50S assembly. It makes multiple contacts with different domains of the 23S rRNA in the assembled 50S subunit and ribosome. Its function is as follows. Forms part of the polypeptide exit tunnel. This chain is Large ribosomal subunit protein uL4, found in Xylella fastidiosa (strain M12).